Here is a 623-residue protein sequence, read N- to C-terminus: Indolepyruvate oxidoreductase subunit IorA (623 aa).

C573, C576, C579, C585, C602, C605, C608, and C612 together coordinate [4Fe-4S] cluster. The 30-residue stretch at 593–622 folds into the 4Fe-4S ferredoxin-type domain; sequence EKVSIDQSLCVGCAVCAKICPNRAIKPAKS.

Heterodimer of the IorA and IorB subunits. [4Fe-4S] cluster serves as cofactor.

It carries out the reaction indole-3-pyruvate + 2 oxidized [2Fe-2S]-[ferredoxin] + CoA = (indol-3-yl)acetyl-CoA + 2 reduced [2Fe-2S]-[ferredoxin] + CO2 + H(+). Catalyzes the ferredoxin-dependent oxidative decarboxylation of arylpyruvates. In Archaeoglobus fulgidus (strain ATCC 49558 / DSM 4304 / JCM 9628 / NBRC 100126 / VC-16), this protein is Indolepyruvate oxidoreductase subunit IorA (iorA).